Here is a 292-residue protein sequence, read N- to C-terminus: Sulfhydrogenase 1 subunit gamma (292 aa).

Positions 15–115 constitute an FAD-binding FR-type domain; sequence YALHRVKVLK…RGPYGNGFPV (101 aa). [2Fe-2S] cluster contacts are provided by Cys-253, Cys-258, Cys-261, and Cys-273.

As to quaternary structure, heterotetramer of alpha, beta, gamma and delta subunits. The nickel-containing alpha and delta subunits constitute the hydrogenase activity. The beta and gamma subunits (flavin-containing dimer) constitute the sulfur reductase activity. The cofactor is FAD. [2Fe-2S] cluster serves as cofactor.

The protein resides in the cytoplasm. The catalysed reaction is n sulfur + H2 = (n-1) sulfur + hydrogen sulfide + H(+). With respect to regulation, stimulated by rubredoxin at pH 7.6 but not ferredoxin. Functionally, part of a bifunctional enzyme complex that functions as an NADPH-dependent hydrogen-evolving hydrogenase with sulfur reducing activity. May play a role in hydrogen cycling during fermentative growth. Activity not exhibited with NAD. The beta and gamma subunits form the sulfur reducing component that catalyzes the cytoplasmic production of hydrogen sulfide in the presence of elemental sulfur. Not active in the presence of sodium sulfate, sodium sulfite, sodium thiosulfate or cysteine. The polypeptide is Sulfhydrogenase 1 subunit gamma (Pyrococcus furiosus (strain ATCC 43587 / DSM 3638 / JCM 8422 / Vc1)).